We begin with the raw amino-acid sequence, 36 residues long: Trypsin inhibitor 2 (36 aa).

Cystine bridges form between C3-C20, C10-C24, and C19-C35.

In terms of biological role, trypsin inhibitor. The chain is Trypsin inhibitor 2 from Spinacia oleracea (Spinach).